The chain runs to 1923 residues: MGNSYAGQLKSARFEEALHNSIEASLRCSSVVPRPIFSQLYLDPDQHPFSSADVKPKVEDLDKDLVNRYTQNGSLDFSNNLTVNEMEDDEDDEEMSDSNSPPIPYSQKPAPEGSCTTDGFCQAGKDLRLVSLCMEQIDIPAGFLLVGAKSPNLPEHILVCAVDKRFLPDDHGKNALLGFSGNCIGCGERGFRYFTEFSNHINLKLTTQPKKQKHLKYYLVRSSQGVLSKGPLICWKECRSRQSSASCHSIKPSSSVSSTVTPENGTTNGYKSGFTQTDAANGNSSHGGKGSASSSTPAHTGNYSLSPRPSYASGDQATMFISGPPKKRHRGWYPGSPLPQPGLVVPVPTVRPLSRTEPLLSAPVPQTPLTGILQPRPIPAGETVIVPENLLSNSGVRPVILIGYGTLPYFYGNVGDIVVSPLLVNCYKIPQLENKDLEKLGLTGSQFLSVENMILLTIQYLVRLGPDQVPLREEFEQIMLKAMQEFTLRERALQIGAQCVPVSPGQLPWLARLIASVSQDLVHVVVTQNSLAEGISETLRTLSEMRHYQRLPDYVVVICASKIRGNEFCVVVLGQHQSRALAESMLTTSEFLKEISYELITGKVSFLASHFKTTSLGDDLDKLLEKMQQRRGDSVVTPFDGDLNECVSPQEAAAMIPTQNLDLDNETFHIYQPQLTVARKLLSQVCAIADSGSQSLDLGHFSKVDFIIIVPRSEVLVQQTLQRIRQSGVLVDLGLEENGTAHQRAEKYVVRLDNEIQTKFEVFMRRVKQNPYTLFVLVHDNSHVELTSVISGSLSHSEPSHGLADRVINCREVLEAFNLLVLQVSSFPYTLQTQQSRISSSNEVHWIQLDTGEDVGCEEKLYFGLSEYSKSLQWGITSPLLRCDETFEKMVNTLLERYPRLHSMVVRCYLLIQQYSEALMALTTMASLRDHSTPETLSIMDDLISSPGKNKSGRGHMLIIRVPSVQLAMLAKERLQEVRDKLGLQYRFEIILGNPATELSVATHFVARLKSWRGNEPEEWIPRTYQDLDGLPCIVILTGKDPLGETFPRSLKYCDLRLIDSSYLTRTALEQEVGLACCYVSKEVIRGPTVALDLSGKEQERAAVSENDSDELLIDLERPQSNSSAVTGTSGSIMENGVSSSSTADKSQKQSLTPSFQSPATSLGLDEGVSASSAGAGAGETLKQECDSLGPQMASSTTSKPSSSSSGPRTLPWPGQPIRGCRGPQAALPPVVILSKAAYSLLGSQKSGKLPSSSSLLPHADVAWVSSLRPLLNKDMSSEEQSLYYRQWTLARQHHADYSNQLDPASGTRNFHPRRLLLTGPPQVGKTGSYLQFLRILFRMLIRLLEVDVYDEEEINTDHNESSEVSQSEGEPWPDIESFSKMPFDVSVHDPKYSLMSLVYTEKLAGVKQEVIKESKVEEPRKRETVSIMLTKYAAYNTFHHCEQCRQYMDFTSASQMSDSTLHAFTFSSSMLGEEVQLYFIIPKSKESHFVFSKQGKHLESMRLPLVSDKNLNAVKSPIFTPSSGRHEHGLLNLFHAMEGISHLHLLVVKEYEMPLYRKYWPNHIMLVLPGMFNNAGVGAARFLIKELSYHNLELERNRLEELGIKRQCVWPFIVMMDDSCVLWNIHSVQEPSSQPMEVGVSSKNVSLKTVLQHIEATPKIVHYAILGIQKWSSKLTSQSLKAPFSRCHVHDFILLNTDLTQNVQYDFNRYFCEDADFNLRTNSSGLLICRFNNFSLMKKHVQVGGQRDFIIKPKIMVSESLAPILPLQYICAPDSEHTLLAAPAQFLLEKFLQHASYKLFPKAIHNFRSPVLAIDCYLNIGPEVAICYISSRPHSSNVNCEGVFFSGLLLYLCDSFVGADLKKFKFLKGATLCVICQDRSSLRQTIVRLELEDEWQFRLRDEFQTANSSDDKPLYFLTGRHV.

Residues 87–96 (EDDEDDEEMS) show a composition bias toward acidic residues. Disordered regions lie at residues 87-111 (EDDE…KPAP), 246-326 (SCHS…GPPK), and 1101-1222 (RAAV…RGCR). The span at 252–262 (PSSSVSSTVTP) shows a compositional bias: low complexity. Polar residues-rich tracts occupy residues 263-278 (ENGT…TQTD), 296-307 (TPAHTGNYSLSP), and 1119-1161 (PQSN…SPAT). Residues 1195–1206 (SSTTSKPSSSSS) are compositionally biased toward low complexity. The helical transmembrane segment at 1843 to 1862 (GVFFSGLLLYLCDSFVGADL) threads the bilayer.

Belongs to the GREB1 family. Widely expressed, with prominent expression in the cochlea. Expressed at high levels in fetal kidney. In adult tissues, highest levels in vagina, cervix and epididymis.

The protein localises to the membrane. In terms of biological role, plays a major role in early metanephros and genital development. The protein is GREB1-like protein (GREB1L) of Homo sapiens (Human).